A 214-amino-acid chain; its full sequence is Adenylate kinase (214 aa).

10–15 (GVGKGT) contacts ATP. The segment at 30–59 (STGDILRAAVKELTPMGAKAKGYMDSGALV) is NMP. AMP contacts are provided by residues threonine 31, arginine 36, 57–59 (ALV), 85–88 (GFPR), and glutamine 92. Residues 126–163 (GRRACANCGAGYHVDFAPSKVAGVCDACSGQLVQREDD) form an LID region. Residue arginine 127 coordinates ATP. Cysteine 130, cysteine 133, cysteine 150, and cysteine 153 together coordinate Zn(2+). Arginine 160 and arginine 171 together coordinate AMP. ATP is bound at residue glycine 199.

It belongs to the adenylate kinase family. In terms of assembly, monomer.

Its subcellular location is the cytoplasm. The catalysed reaction is AMP + ATP = 2 ADP. Its pathway is purine metabolism; AMP biosynthesis via salvage pathway; AMP from ADP: step 1/1. In terms of biological role, catalyzes the reversible transfer of the terminal phosphate group between ATP and AMP. Plays an important role in cellular energy homeostasis and in adenine nucleotide metabolism. This is Adenylate kinase from Geobacter sp. (strain M21).